Consider the following 521-residue polypeptide: Acetylcholine receptor subunit delta (521 aa).

Positions 1 to 21 (MAWIWISLLLPILIYFPGCFS) are cleaved as a signal peptide. Residues 22 to 247 (ESEEERLLNH…ITFYLIIERK (226 aa)) are Extracellular-facing. Residues Asn-53 and Asn-164 are each glycosylated (N-linked (GlcNAc...) asparagine). Cys-151 and Cys-165 are disulfide-bonded. 3 consecutive transmembrane segments (helical) span residues 248–272 (PLFY…VFYL), 280–297 (MTLA…LLLI), and 314–335 (YLMF…VLNL). Over 336-475 (HFRTPSTHAI…WYRIARTVDR (140 aa)) the chain is Cytoplasmic. Tyr-394 is subject to Phosphotyrosine; by Tyr-kinases. Residues 476 to 494 (LCLFLVTPVMIIGTLWIFL) traverse the membrane as a helical segment.

It belongs to the ligand-gated ion channel (TC 1.A.9) family. Acetylcholine receptor (TC 1.A.9.1) subfamily. Pentamer of two alpha chains, and one each of the beta, delta, and gamma (in immature muscle) or epsilon (in mature muscle) chains.

It localises to the postsynaptic cell membrane. Its subcellular location is the cell membrane. The enzyme catalyses K(+)(in) = K(+)(out). It carries out the reaction Na(+)(in) = Na(+)(out). Functionally, after binding acetylcholine, the AChR responds by an extensive change in conformation that affects all subunits and leads to opening of an ion-conducting channel across the plasma membrane. The chain is Acetylcholine receptor subunit delta (chrnd) from Xenopus laevis (African clawed frog).